The primary structure comprises 99 residues: DNA-binding protein HU (99 aa).

Belongs to the bacterial histone-like protein family. Homodimer.

Histone-like DNA-binding protein which is capable of wrapping DNA to stabilize it, and thus to prevent its denaturation under extreme environmental conditions. This is DNA-binding protein HU (hup) from Rickettsia typhi (strain ATCC VR-144 / Wilmington).